Here is a 78-residue protein sequence, read N- to C-terminus: HssA/B-like protein 29 (78 aa).

The segment at M1 to M31 is disordered.

Belongs to the hssA/B family.

This Dictyostelium discoideum (Social amoeba) protein is HssA/B-like protein 29 (hssl29).